Consider the following 191-residue polypeptide: Adenylate kinase (191 aa).

11–16 (GAGKGT) contacts ATP. The tract at residues 31 to 60 (STGDILRSNVAERSPLGIKAKDYMDKGDLV) is NMP. AMP contacts are provided by residues T32, R37, 58–60 (DLV), 86–89 (GFPR), and Q93. Residues 132-138 (SRKREDD) are LID. R133 contacts ATP. Residues R135 and R146 each contribute to the AMP site. Residue N174 participates in ATP binding.

Belongs to the adenylate kinase family. As to quaternary structure, monomer.

Its subcellular location is the cytoplasm. It carries out the reaction AMP + ATP = 2 ADP. It functions in the pathway purine metabolism; AMP biosynthesis via salvage pathway; AMP from ADP: step 1/1. Its function is as follows. Catalyzes the reversible transfer of the terminal phosphate group between ATP and AMP. Plays an important role in cellular energy homeostasis and in adenine nucleotide metabolism. This is Adenylate kinase from Trichodesmium erythraeum (strain IMS101).